The sequence spans 226 residues: ATP-dependent dethiobiotin synthetase BioD (226 aa).

Residue 13-18 (DVGKTL) participates in ATP binding. T17 is a binding site for Mg(2+). The active site involves K38. Residues D55, 117 to 120 (EGAG), 177 to 178 (NR), 206 to 208 (PFV), and E213 each bind ATP. Mg(2+) contacts are provided by D55 and E117.

The protein belongs to the dethiobiotin synthetase family. In terms of assembly, homodimer. Requires Mg(2+) as cofactor.

It is found in the cytoplasm. It catalyses the reaction (7R,8S)-7,8-diammoniononanoate + CO2 + ATP = (4R,5S)-dethiobiotin + ADP + phosphate + 3 H(+). The protein operates within cofactor biosynthesis; biotin biosynthesis; biotin from 7,8-diaminononanoate: step 1/2. Catalyzes a mechanistically unusual reaction, the ATP-dependent insertion of CO2 between the N7 and N8 nitrogen atoms of 7,8-diaminopelargonic acid (DAPA, also called 7,8-diammoniononanoate) to form a ureido ring. The sequence is that of ATP-dependent dethiobiotin synthetase BioD from Aeromonas hydrophila subsp. hydrophila (strain ATCC 7966 / DSM 30187 / BCRC 13018 / CCUG 14551 / JCM 1027 / KCTC 2358 / NCIMB 9240 / NCTC 8049).